The primary structure comprises 280 residues: Protease HtpX (280 aa).

The next 2 helical transmembrane spans lie at 7–26 (TFIL…GLLG) and 30–49 (GMLV…YWYS). A Zn(2+)-binding site is contributed by His-129. The active site involves Glu-130. His-133 serves as a coordination point for Zn(2+). The next 2 membrane-spanning stretches (helical) occupy residues 146–166 (ATIA…SMFG) and 178–198 (VVGM…QMAI). Residue Glu-203 coordinates Zn(2+).

The protein belongs to the peptidase M48B family. Requires Zn(2+) as cofactor.

The protein localises to the cell inner membrane. This chain is Protease HtpX, found in Legionella pneumophila (strain Corby).